We begin with the raw amino-acid sequence, 76 residues long: Acyl carrier protein (76 aa).

The Carrier domain maps to 2–76; sequence SSIFDKVKAI…SAVEYIKENQ (75 aa). Ser36 bears the O-(pantetheine 4'-phosphoryl)serine mark.

It belongs to the acyl carrier protein (ACP) family. In terms of processing, 4'-phosphopantetheine is transferred from CoA to a specific serine of apo-ACP by AcpS. This modification is essential for activity because fatty acids are bound in thioester linkage to the sulfhydryl of the prosthetic group.

It localises to the cytoplasm. The protein operates within lipid metabolism; fatty acid biosynthesis. Its function is as follows. Carrier of the growing fatty acid chain in fatty acid biosynthesis. The polypeptide is Acyl carrier protein (Heliobacterium modesticaldum (strain ATCC 51547 / Ice1)).